A 233-amino-acid polypeptide reads, in one-letter code: MADS-box transcription factor 56 (233 aa).

Residues 1 to 61 (MVRGRTELKR…GRLYEFASAP (61 aa)) enclose the MADS-box domain. One can recognise a K-box domain in the interval 87–177 (IQQVKDDTLG…RGKHRNLEAA (91 aa)).

The protein localises to the nucleus. Functionally, probable transcription factor. The protein is MADS-box transcription factor 56 (MADS56) of Oryza sativa subsp. japonica (Rice).